The primary structure comprises 274 residues: PTS system sorbose-specific EIID component (274 aa).

Residues 4–273 form the PTS EIID domain; it reads KKITQGDLVS…GIIGNALGFL (270 aa). 6 consecutive transmembrane segments (helical) span residues 61–81, 99–119, 126–146, 186–206, 226–246, and 253–273; these read LVFF…TAAM, IKVG…WGTL, LGAS…FFIF, ILGL…NVPL, ILDQ…MVRL, and PVWL…LGFL.

The protein resides in the cell inner membrane. The phosphoenolpyruvate-dependent sugar phosphotransferase system (PTS), a major carbohydrate active transport system, catalyzes the phosphorylation of incoming sugar substrates concomitant with their translocation across the cell membrane. The enzyme II SorABFM PTS system is involved in sorbose transport. The sequence is that of PTS system sorbose-specific EIID component from Klebsiella pneumoniae.